The primary structure comprises 237 residues: Periplasmic deoxyribonuclease (237 aa).

The first 27 residues, 1–27, serve as a signal peptide directing secretion; sequence MSRPSRVLGLPLLSLGLTLLVSTPLQA.

This sequence belongs to the EndA/NucM nuclease family.

The protein localises to the periplasm. Functionally, endonuclease which is capable of degrading plasmid DNA. This chain is Periplasmic deoxyribonuclease (dnsH), found in Aeromonas hydrophila.